Reading from the N-terminus, the 111-residue chain is Prostatic steroid-binding protein C1 (111 aa).

Residues 1–23 (MSTIKLSLCLLIMLAVCCYEANA) form the signal peptide.

The protein belongs to the secretoglobin family. Lipophilin subfamily. As to quaternary structure, prostatein is composed of three different peptides called C1, C2 and C3. These form covalent C1:C3 (F) and C2:C3 (S) heterodimers whose noncovalent association forms tetrameric (C1:C3/C3:C2) prostatein molecules.

The protein localises to the secreted. Functionally, part of prostatein which is the major secretory glycoprotein of ventral prostate gland. This Rattus norvegicus (Rat) protein is Prostatic steroid-binding protein C1 (Psbpc1).